The primary structure comprises 263 residues: Shikimate dehydrogenase (NADP(+)) (263 aa).

Shikimate contacts are provided by residues 16–18 (SKS) and Thr-65. The active-site Proton acceptor is Lys-69. Shikimate contacts are provided by Asn-90 and Asp-105. Residues 125-129 (GSGGS) and Leu-208 contribute to the NADP(+) site. Tyr-210 is a shikimate binding site. Gly-230 contributes to the NADP(+) binding site.

It belongs to the shikimate dehydrogenase family. As to quaternary structure, homodimer.

The enzyme catalyses shikimate + NADP(+) = 3-dehydroshikimate + NADPH + H(+). It functions in the pathway metabolic intermediate biosynthesis; chorismate biosynthesis; chorismate from D-erythrose 4-phosphate and phosphoenolpyruvate: step 4/7. In terms of biological role, involved in the biosynthesis of the chorismate, which leads to the biosynthesis of aromatic amino acids. Catalyzes the reversible NADPH linked reduction of 3-dehydroshikimate (DHSA) to yield shikimate (SA). The chain is Shikimate dehydrogenase (NADP(+)) from Helicobacter acinonychis (strain Sheeba).